Consider the following 368-residue polypeptide: RNA polymerase sigma factor SigA (368 aa).

A disordered region spans residues 69-90; that stretch reads LVNEKDSSDTDEKLNPSDLSAP. Over residues 71–83 the composition is skewed to basic and acidic residues; it reads NEKDSSDTDEKLN. Positions 135–205 are sigma-70 factor domain-2; the sequence is LAEANLRLVV…TRAIADQART (71 aa). Positions 159–162 match the Interaction with polymerase core subunit RpoC motif; it reads DLIQ. The tract at residues 214-290 is sigma-70 factor domain-3; sequence ETINKLIRVQ…DQEAQSPSDH (77 aa). The sigma-70 factor domain-4 stretch occupies residues 303-356; sequence VLDTLTDREENVLRLRFGLDDGRTRTLEEVGKVFGVTRERIRQIEAKALRKLRH. The H-T-H motif DNA-binding region spans 329-348; the sequence is LEEVGKVFGVTRERIRQIEA.

The protein belongs to the sigma-70 factor family. RpoD/SigA subfamily. As to quaternary structure, interacts transiently with the RNA polymerase catalytic core.

It localises to the cytoplasm. Sigma factors are initiation factors that promote the attachment of RNA polymerase to specific initiation sites and are then released. This sigma factor is the primary sigma factor during exponential growth. In Staphylococcus aureus (strain N315), this protein is RNA polymerase sigma factor SigA.